A 330-amino-acid polypeptide reads, in one-letter code: Malate dehydrogenase (330 aa).

Residue glycine 11–alanine 17 participates in NAD(+) binding. The substrate site is built by arginine 92 and arginine 98. NAD(+) is bound by residues asparagine 105, glutamine 112, and valine 129–asparagine 131. Substrate is bound by residues asparagine 131 and arginine 162. The active-site Proton acceptor is histidine 187.

It belongs to the LDH/MDH superfamily. MDH type 2 family.

It carries out the reaction (S)-malate + NAD(+) = oxaloacetate + NADH + H(+). Its function is as follows. Catalyzes the reversible oxidation of malate to oxaloacetate. The protein is Malate dehydrogenase of Protochlamydia amoebophila (strain UWE25).